A 71-amino-acid chain; its full sequence is BBSome-interacting protein 1 (71 aa).

The protein belongs to the BBIP10 family.

The protein localises to the cell projection. Its subcellular location is the cilium. It is found in the cytoplasm. Required for primary cilia assembly. This Nematostella vectensis (Starlet sea anemone) protein is BBSome-interacting protein 1 (bbip1).